A 428-amino-acid chain; its full sequence is MPGIVLIGAQWGDEGKGKATDLIGTKVDYVARFNGGNNAGHTVVVGDESYALHLLPSGIISPNTTPVIGNGVVVDPEVLFQEIDGLESRGVDCSRLLVSESAHIIAPYHRVLDKVTERFLGKHKIGTTGRGIGPAYADKINRVGIRVHDLFNAEHLHDKVEASLHQKNQMLVKLYNRRPIDVDETTDELLKLGERLKPYVANTSLVLNKALDEGKTVLFEGGQATMLDVDHGTYPFVTSSNPTAGGACTGTGVGPTKITRVVGVSKAYVTRVGEGPFPTELFGEEGEWLRAQGHEYGVTTGRPRRCGWFDAVVNRYAAQVNGLTDIVLTKLDVLTGLKEIPLCVAYDVNGERRDDMPTDQAEFAAAKPIYESMPGWDEDISQVHDFNDLPKTCQDYVKRLEELSGCRISVIGTGPQRDHIIQINSLID.

GTP-binding positions include 12–18 (GDEGKGK) and 40–42 (GHT). Aspartate 13 (proton acceptor) is an active-site residue. The Mg(2+) site is built by aspartate 13 and glycine 40. Residues 13–16 (DEGK), 38–41 (NAGH), threonine 128, arginine 142, glutamine 223, threonine 238, and arginine 302 contribute to the IMP site. Histidine 41 functions as the Proton donor in the catalytic mechanism. Substrate is bound at residue 298 to 304 (VTTGRPR). GTP contacts are provided by residues arginine 304, 330–332 (KLD), and 412–414 (GTG).

This sequence belongs to the adenylosuccinate synthetase family. As to quaternary structure, homodimer. Requires Mg(2+) as cofactor.

It localises to the cytoplasm. It carries out the reaction IMP + L-aspartate + GTP = N(6)-(1,2-dicarboxyethyl)-AMP + GDP + phosphate + 2 H(+). It functions in the pathway purine metabolism; AMP biosynthesis via de novo pathway; AMP from IMP: step 1/2. In terms of biological role, plays an important role in the de novo pathway of purine nucleotide biosynthesis. Catalyzes the first committed step in the biosynthesis of AMP from IMP. The protein is Adenylosuccinate synthetase of Bifidobacterium adolescentis (strain ATCC 15703 / DSM 20083 / NCTC 11814 / E194a).